The following is a 384-amino-acid chain: S-adenosylmethionine synthase (384 aa).

His15 lines the ATP pocket. Asp17 is a binding site for Mg(2+). Glu43 is a binding site for K(+). Positions 56 and 99 each coordinate L-methionine. The interval 99-109 is flexible loop; sequence QSPDINQGVDR. Residues 164–166, 230–231, Asp239, 245–246, Ala262, and Lys266 each bind ATP; these read DAK, RF, and RK. L-methionine is bound at residue Asp239. Residue Lys270 participates in L-methionine binding.

Belongs to the AdoMet synthase family. As to quaternary structure, homotetramer; dimer of dimers. Requires Mg(2+) as cofactor. The cofactor is K(+).

The protein resides in the cytoplasm. The enzyme catalyses L-methionine + ATP + H2O = S-adenosyl-L-methionine + phosphate + diphosphate. Its pathway is amino-acid biosynthesis; S-adenosyl-L-methionine biosynthesis; S-adenosyl-L-methionine from L-methionine: step 1/1. Its function is as follows. Catalyzes the formation of S-adenosylmethionine (AdoMet) from methionine and ATP. The overall synthetic reaction is composed of two sequential steps, AdoMet formation and the subsequent tripolyphosphate hydrolysis which occurs prior to release of AdoMet from the enzyme. The polypeptide is S-adenosylmethionine synthase (Shigella boydii serotype 18 (strain CDC 3083-94 / BS512)).